Consider the following 241-residue polypeptide: MSTIPFSPKQKPDESTLTDRQRKVLDAIRTHIDEQGFAPSFREIGNAAGLKSPSSVKHQLQVLEDKGFIRMNANKGRAIEVVAGSAPNAEKPSQASEEATSTSNVAEIYQFPAEAIAESHDVPLVGRIAAGVPITAEQHVDDVMRLPERLTGSGTLFMLEVHGDSMVDAAICDGDYVVVREQNSAVNGDIVAALLDDEATVKTFRKENGHVWLMPHNPAYSPIDGTHATIMGKVVTVLRKL.

A DNA-binding region (H-T-H motif) is located at residues 41–61; sequence FREIGNAAGLKSPSSVKHQLQ. Catalysis depends on for autocatalytic cleavage activity residues serine 165 and lysine 202.

Belongs to the peptidase S24 family. In terms of assembly, homodimer.

The enzyme catalyses Hydrolysis of Ala-|-Gly bond in repressor LexA.. Represses a number of genes involved in the response to DNA damage (SOS response), including recA and lexA. In the presence of single-stranded DNA, RecA interacts with LexA causing an autocatalytic cleavage which disrupts the DNA-binding part of LexA, leading to derepression of the SOS regulon and eventually DNA repair. This Bifidobacterium longum (strain DJO10A) protein is LexA repressor.